The chain runs to 332 residues: Serpentine receptor class alpha-10 (332 aa).

The Extracellular portion of the chain corresponds to 1-26 (MTSSNISICATEDQMVLQTSLLLRVN). The chain crosses the membrane as a helical span at residues 27–47 (VILMTTVAIFTFVLTYRALFI). Residues 48–64 (LKQRPIFHKSTKILLYT) are Cytoplasmic-facing. The chain crosses the membrane as a helical span at residues 65–85 (SLIFVNIHEIIFMVIQCVAFI). The Extracellular segment spans residues 86 to 109 (RSFTLSDKPCEIMRTTLECRFKNH). The chain crosses the membrane as a helical span at residues 110–132 (VLIFGIAGMNFNQFGLTVDRLLA). Topologically, residues 133-146 (TVIPQTYSHLGSFP) are cytoplasmic. Residues 147–167 (GILISILVIGCSIAAPLIIAI) traverse the membrane as a helical segment. At 168–191 (GDPYDDIVPNCFFFPQHSAPRANV) the chain is on the extracellular side. Residues 192-212 (FLIILSALVIASIFLNLIIIF) traverse the membrane as a helical segment. Residues 213–239 (ANKKLEKGTRYYVSQRYQKREALISTR) lie on the Cytoplasmic side of the membrane. Residues 240–260 (IIVYIAASQFLGMVLYSTIVL) traverse the membrane as a helical segment. The Extracellular segment spans residues 261–276 (TLRLHKSMIPVSMYHN). Residues 277-297 (IVWWAYTVPFAAVALPALLIH) traverse the membrane as a helical segment. Topologically, residues 298–332 (RINLVGSNRKRVINRITAKVETQEEHMKSLKELWG) are cytoplasmic.

This sequence belongs to the nematode receptor-like protein sra family.

The protein resides in the membrane. The polypeptide is Serpentine receptor class alpha-10 (Caenorhabditis briggsae).